We begin with the raw amino-acid sequence, 242 residues long: Transcription factor TCP17 (242 aa).

One can recognise a TCP domain in the interval 33–91 (GKDRHSKVCTVRGLRDRRIRLSVMTAIQVYDLQERLGLSQPSKVIDWLLEVAKNDVDLL).

Interacts with SPL. Expressed in cotyledons, particularly in the vascular region, in leaves, roots, stems, buds, flowers and siliques.

Its subcellular location is the nucleus. Its function is as follows. Plays a pivotal role in the control of morphogenesis of shoot organs by negatively regulating the expression of boundary-specific genes such as CUC genes, probably through the induction of miRNA (e.g. miR164). Participates in ovule development. The sequence is that of Transcription factor TCP17 (TCP17) from Arabidopsis thaliana (Mouse-ear cress).